Here is a 25-residue protein sequence, read N- to C-terminus: Ranatuerin-1C (25 aa).

A disulfide bridge links C19 with C25.

In terms of tissue distribution, expressed by the skin glands.

The protein localises to the secreted. Functionally, antibacterial activity against Gram-positive bacterium S.aureus (MIC=55 uM) and Gram-negative bacterium E.coli (MIC=1.5 uM). Has activity against C.albicans (MIC=58 uM). The protein is Ranatuerin-1C of Lithobates clamitans (Green frog).